The following is a 145-amino-acid chain: Cytochrome c2 (145 aa).

The first 21 residues, 1–21 (MKFQVKALAAIAAFAALPALA), serve as a signal peptide directing secretion. Residue Gln-22 is modified to Pyrrolidone carboxylic acid. Residues Cys-36, Cys-39, His-40, and Met-121 each contribute to the heme c site.

This sequence belongs to the cytochrome c family. In terms of processing, binds 1 heme c group covalently per subunit.

It localises to the periplasm. Functionally, cytochrome c2 is found mainly in purple, non-sulfur, photosynthetic bacteria where it functions as the electron donor to the oxidized bacteriochlorophyll in the photophosphorylation pathway. However, it may also have a role in the respiratory chain and is found in some non-photosynthetic bacteria. The polypeptide is Cytochrome c2 (cycA) (Cereibacter sphaeroides (strain ATCC 17023 / DSM 158 / JCM 6121 / CCUG 31486 / LMG 2827 / NBRC 12203 / NCIMB 8253 / ATH 2.4.1.) (Rhodobacter sphaeroides)).